Consider the following 365-residue polypeptide: Histidinol-phosphate aminotransferase (365 aa).

Position 227 is an N6-(pyridoxal phosphate)lysine (K227).

This sequence belongs to the class-II pyridoxal-phosphate-dependent aminotransferase family. Histidinol-phosphate aminotransferase subfamily. In terms of assembly, homodimer. Pyridoxal 5'-phosphate serves as cofactor.

It carries out the reaction L-histidinol phosphate + 2-oxoglutarate = 3-(imidazol-4-yl)-2-oxopropyl phosphate + L-glutamate. It participates in amino-acid biosynthesis; L-histidine biosynthesis; L-histidine from 5-phospho-alpha-D-ribose 1-diphosphate: step 7/9. The protein is Histidinol-phosphate aminotransferase of Campylobacter concisus (strain 13826).